Consider the following 626-residue polypeptide: MPSSHDWINKPLGVVEAMFAQNNSNPEWEEKVLEYFRGQLKEKESLSWVPSLNDVPLHYLKPNSLVKFRCLVQDMFDPEFYMGVYETVDPSTKTNVLRCGKYKDVTECGVDLNSRNTVTAERQTFYCVPIPGESPWAKESYGCSSQARVVPSTSYVPSRQKRSYEEDDDDMDTQPQKQREPHTEPHGNGDSKRQETEAPSSQTTAPSDCSSHLDLNFPLPGERGPACLVKVYEGLDSFKLNDTLEIYGILSVNPVLTVLGEEKDPSSLLLNPSESMESPEEQRAHDPPASLVPRLHMLYARPLQHNNPLLPSAPTEDHSAFVSSFLVEMASVRAELLAYLTHVLLGDGLAAEYLLLHLISNVYTRRDVLPLGKFTLNLSGCPLNSYTERLYQIIQQLVPCSYRLSMSLHTMNSMRLVPKKDYVANRLVSGALQLARNTSLFLDETQLEQGQLDSSGVRNITALGNLISWQKVDYDFSYHQMEFPCNINVLVTSEGRSLLPSDCQVPLQPQVTPPNMEEYLTTIHMAQFTSQMNKFRVYLSLARTLDYSISDEVTKAVEDDFVDMRKDDPQSVTAEDLHRMLVVARLLSLSMGQTTLSRDGWMRAKHIDMLRRSRTEQQKSLNSNEP.

2 disordered regions span residues 152-216 (STSY…LDLN) and 265-287 (PSSL…AHDP). Basic and acidic residues predominate over residues 177-196 (KQREPHTEPHGNGDSKRQET). The span at 197 to 210 (EAPSSQTTAPSDCS) shows a compositional bias: polar residues.

The protein belongs to the MCMBP family. As to quaternary structure, interacts with the mcm complex: associates with the mcm3-7 complex which lacks mcm2, while it does not interact with the mcm complex when mcm2 is present (mcm2-7 complex).

The protein localises to the nucleus. Its function is as follows. Associated component of the mcm complex that acts as a regulator of DNA replication. Binds to the MCM complex during late S phase and promotes the disassembly of the mcm complex from chromatin, thereby acting as a key regulator of pre-replication complex (pre-RC) unloading from replicated DNA. Can dissociate the mcm complex without addition of ATP; probably acts by destabilizing interactions of each individual subunits of the mcm complex. Required for sister chromatid cohesion. The protein is Mini-chromosome maintenance complex-binding protein (mcmbp) of Salmo salar (Atlantic salmon).